A 482-amino-acid chain; its full sequence is O-methyltransferase tpcA (482 aa).

S-adenosyl-L-methionine contacts are provided by residues Gly293–Gly294, Asp316, Ser348–Phe349, and Arg364. Catalysis depends on His368, which acts as the Proton acceptor.

Belongs to the class I-like SAM-binding methyltransferase superfamily. Cation-independent O-methyltransferase family. In terms of tissue distribution, specifically expressed in conidia.

It participates in secondary metabolite biosynthesis. O-methyltransferase; part of the gene cluster that mediates the biosynthesis of trypacidin, a mycotoxin with antiprotozoal activity and that plays a role in the infection process. The pathway begins with the synthesis of atrochrysone thioester by the polyketide synthase (PKS) tpcC. The atrochrysone carboxyl ACP thioesterase tpcB then breaks the thioester bond and releases the atrochrysone carboxylic acid from tpcC. The decarboxylase tpcK converts atrochrysone carboxylic acid to atrochrysone which is further reduced into emodin anthrone. The next step is performed by the emodin anthrone oxygenase tpcL that catalyzes the oxidation of emodinanthrone to emodin. Emodin O-methyltransferase encoded by tpcA catalyzes methylation of the 8-hydroxy group of emodin to form questin. Ring cleavage of questin by questin oxidase tpcI leads to desmethylsulochrin via several intermediates including questin epoxide. Another methylation step catalyzed by tpcM leads to the formation of sulochrin which is further converted to monomethylsulfochrin by tpcH. Finally, the tpcJ catalyzes the conversion of monomethylsulfochrin to trypacidin. Trypacidin is toxic for human pulmonary and bronchial epithelial cells by initiating the intracellular formation of nitric oxide (NO) and hydrogen peroxide (H(2)O(2)), thus triggering host necrotic cell death. The trypacidin pathway is also able to produce endocrocin via a distinct route from the endocrocin Enc pathway. This Aspergillus fumigatus (strain ATCC MYA-4609 / CBS 101355 / FGSC A1100 / Af293) (Neosartorya fumigata) protein is O-methyltransferase tpcA.